A 722-amino-acid chain; its full sequence is Polyribonucleotide nucleotidyltransferase (722 aa).

Positions 498 and 504 each coordinate Mg(2+). The KH domain maps to 565–624 (PQFHTMKIDPDKIRDIIGKGGATIRSITEETGASIDIDDNGTIKIYADDGDGMQAAIARI). An S1 motif domain is found at 634 to 702 (GAVYQGKVVR…QRGRIKLSIK (69 aa)).

It belongs to the polyribonucleotide nucleotidyltransferase family. Component of the RNA degradosome, which is a multiprotein complex involved in RNA processing and mRNA degradation. It depends on Mg(2+) as a cofactor.

The protein localises to the cytoplasm. The catalysed reaction is RNA(n+1) + phosphate = RNA(n) + a ribonucleoside 5'-diphosphate. In terms of biological role, involved in mRNA degradation. Catalyzes the phosphorolysis of single-stranded polyribonucleotides processively in the 3'- to 5'-direction. The sequence is that of Polyribonucleotide nucleotidyltransferase from Saccharophagus degradans (strain 2-40 / ATCC 43961 / DSM 17024).